The chain runs to 269 residues: MAINEYKYGGVLMTKPYYEKENAILVHADSFKLLEKIKPESMDMIFADPPYFLSNGGMSNSGGQIVSVDKGDWDKISSFEEKHDFNRRWIRLARLVLKPNGTIWVSGSLHNIYSVGMALEQEGFKILNNITWQKTNPAPNLSCRYFTHSTETILWARKNDKKSRHYYNYELMKEFNDGKQMKDVWTGSLTKKSEKWAGKHPTQKPEYILERIILASTKENDYILDPFVGSGTTGVVAKRLGRKFIGIDSEKEYLKIAKKRLNKGATYGL.

Belongs to the N(4)/N(6)-methyltransferase family.

It carries out the reaction a 2'-deoxyadenosine in DNA + S-adenosyl-L-methionine = an N(6)-methyl-2'-deoxyadenosine in DNA + S-adenosyl-L-homocysteine + H(+). Functionally, a beta subtype methylase, recognizes the double-stranded sequence 5'-GATC-3', methylates A-2 on both strands, and protects the DNA from cleavage by the LlaDCHI endonuclease. In Lactococcus lactis subsp. cremoris (Streptococcus cremoris), this protein is Type II methyltransferase M2.LlaDCHI.